A 182-amino-acid polypeptide reads, in one-letter code: Ribosome-recycling factor (182 aa).

A disordered region spans residues 136–156 (IRKQEKNSDISKDESRDLQDK).

The protein belongs to the RRF family.

The protein resides in the cytoplasm. Functionally, responsible for the release of ribosomes from messenger RNA at the termination of protein biosynthesis. May increase the efficiency of translation by recycling ribosomes from one round of translation to another. The chain is Ribosome-recycling factor from Trichodesmium erythraeum (strain IMS101).